The chain runs to 147 residues: Alpha-amylase/trypsin inhibitor (147 aa).

A signal peptide spans 1–21 (MASDHRRFVLSGAVLLSVLAV).

It belongs to the protease inhibitor I6 (cereal trypsin/alpha-amylase inhibitor) family. In terms of processing, five disulfide bonds, which are essential for the inhibitor activity, are probably present. Endosperm.

It localises to the secreted. Its function is as follows. Alpha-amylase/trypsin inhibitor. This chain is Alpha-amylase/trypsin inhibitor, found in Hordeum vulgare (Barley).